The primary structure comprises 336 residues: Cytoskeleton protein RodZ (336 aa).

Topologically, residues 1-111 (MNTEATHDQN…LGKRRKKRDG (111 aa)) are cytoplasmic. Residues 19-71 (LRNAREQLGLSQQAVAERLCLKVSTVRDIEEDKAPADLASTFLRGYIRSYARL) form the HTH cro/C1-type domain. A DNA-binding region (H-T-H motif) is located at residues 30–49 (QQAVAERLCLKVSTVRDIEE). A helical; Signal-anchor for type II membrane protein membrane pass occupies residues 112–132 (WLMTFTWLVLFVVIGLSGAWW). Residues 133–336 (WQDHKAQQEE…TLNAEQSPAQ (204 aa)) are Periplasmic-facing. Residues 148-164 (DQSSAELNNNQSQSVPL) are compositionally biased toward polar residues. The tract at residues 148–245 (DQSSAELNNN…PLPTDQAGVT (98 aa)) is disordered. Low complexity predominate over residues 165 to 201 (DTSTTTDQAMATTPTSPVDTTATNTQTPAATTAPSPT). Positions 202 to 217 (VDSQQNAVVPPSQANV) are enriched in polar residues. Residues 218-240 (DTAATPAPAATTTPDGAAPLPTD) show a composition bias toward low complexity.

The protein belongs to the RodZ family.

The protein resides in the cell inner membrane. Functionally, cytoskeletal protein that is involved in cell-shape control through regulation of the length of the long axis. The polypeptide is Cytoskeleton protein RodZ (Escherichia coli O7:K1 (strain IAI39 / ExPEC)).